Here is a 563-residue protein sequence, read N- to C-terminus: L-lactate permease (563 aa).

The next 14 membrane-spanning stretches (helical) occupy residues 14–34 (LLLSALAALVPIIFFFWALAI), 37–57 (MKGYTAGLATLGIALIIAVLV), 73–93 (AVYGLLPIGWIIVTSVFLYKI), 131–151 (GAAGFGAPVAISAALLVGLGF), 157–177 (AGICLIANTAPVAFGAIGIPI), 194–214 (MVGRQLPFLSVFIPLYLIIIM), 220–240 (ALEIWPAILVSGVSFAVVQYL), 249–269 (LPDVLSALVSMAALAVFLKWW), 304–324 (IFKAWSPFLLLTAMISVWGIP), 381–401 (LGSAGTAILIAAVLSKFITAI), 419–439 (LPILTIASVVGFAYVTNSSGM), 448–468 (ALTGSMFTFFSPVLGWLGVFI), 506–526 (VTGKMISPQSIAVACAAVGLA), and 542–562 (FLLLLVCIITFLQHHVFSWMI).

Belongs to the lactate permease family.

It is found in the cell membrane. Is the principal permease for the uptake of L-lactate in B.subtilis. The polypeptide is L-lactate permease (lutP) (Bacillus subtilis (strain 168)).